The chain runs to 171 residues: Small ribosomal subunit protein uS13 (171 aa).

Disordered stretches follow at residues 1 to 22 (MGKA…AAKK) and 142 to 171 (RHEK…RKKE). Positions 10-22 (KSDKEAAKPAAKK) are enriched in basic and acidic residues. Positions 142–158 (RHEKGKKVRGQRTRSNG) are enriched in basic residues.

This sequence belongs to the universal ribosomal protein uS13 family. Part of the 30S ribosomal subunit. Forms a loose heterodimer with protein S19. Forms two bridges to the 50S subunit in the 70S ribosome.

In terms of biological role, located at the top of the head of the 30S subunit, it contacts several helices of the 16S rRNA. In the 70S ribosome it contacts the 23S rRNA (bridge B1a) and protein L5 of the 50S subunit (bridge B1b), connecting the 2 subunits; these bridges are implicated in subunit movement. The polypeptide is Small ribosomal subunit protein uS13 (Thermoplasma volcanium (strain ATCC 51530 / DSM 4299 / JCM 9571 / NBRC 15438 / GSS1)).